The primary structure comprises 482 residues: Glycogen synthase (482 aa).

Lys18 provides a ligand contact to ADP-alpha-D-glucose.

It belongs to the glycosyltransferase 1 family. Bacterial/plant glycogen synthase subfamily.

It catalyses the reaction [(1-&gt;4)-alpha-D-glucosyl](n) + ADP-alpha-D-glucose = [(1-&gt;4)-alpha-D-glucosyl](n+1) + ADP + H(+). It functions in the pathway glycan biosynthesis; glycogen biosynthesis. In terms of biological role, synthesizes alpha-1,4-glucan chains using ADP-glucose. The polypeptide is Glycogen synthase (Rhodopseudomonas palustris (strain HaA2)).